The primary structure comprises 384 residues: Succinyl-diaminopimelate desuccinylase (384 aa).

His71 lines the Zn(2+) pocket. The active site involves Asp73. Residue Asp104 coordinates Zn(2+). Glu138 (proton acceptor) is an active-site residue. Zn(2+)-binding residues include Glu139, Glu167, and His357.

This sequence belongs to the peptidase M20A family. DapE subfamily. In terms of assembly, homodimer. Zn(2+) serves as cofactor. It depends on Co(2+) as a cofactor.

It carries out the reaction N-succinyl-(2S,6S)-2,6-diaminopimelate + H2O = (2S,6S)-2,6-diaminopimelate + succinate. The protein operates within amino-acid biosynthesis; L-lysine biosynthesis via DAP pathway; LL-2,6-diaminopimelate from (S)-tetrahydrodipicolinate (succinylase route): step 3/3. Its function is as follows. Catalyzes the hydrolysis of N-succinyl-L,L-diaminopimelic acid (SDAP), forming succinate and LL-2,6-diaminopimelate (DAP), an intermediate involved in the bacterial biosynthesis of lysine and meso-diaminopimelic acid, an essential component of bacterial cell walls. The protein is Succinyl-diaminopimelate desuccinylase of Blochmanniella floridana.